The primary structure comprises 262 residues: Acyl-[acyl-carrier-protein]--UDP-N-acetylglucosamine O-acyltransferase (262 aa).

Belongs to the transferase hexapeptide repeat family. LpxA subfamily. As to quaternary structure, homotrimer.

The protein resides in the cytoplasm. It carries out the reaction a (3R)-hydroxyacyl-[ACP] + UDP-N-acetyl-alpha-D-glucosamine = a UDP-3-O-[(3R)-3-hydroxyacyl]-N-acetyl-alpha-D-glucosamine + holo-[ACP]. It participates in glycolipid biosynthesis; lipid IV(A) biosynthesis; lipid IV(A) from (3R)-3-hydroxytetradecanoyl-[acyl-carrier-protein] and UDP-N-acetyl-alpha-D-glucosamine: step 1/6. In terms of biological role, involved in the biosynthesis of lipid A, a phosphorylated glycolipid that anchors the lipopolysaccharide to the outer membrane of the cell. The sequence is that of Acyl-[acyl-carrier-protein]--UDP-N-acetylglucosamine O-acyltransferase from Salmonella dublin (strain CT_02021853).